The chain runs to 487 residues: GTPase Der (487 aa).

The disordered stretch occupies residues 1–20 (MAKAVRKSNSEETVPIKAPR). 2 EngA-type G domains span residues 28–197 (PVVS…SSKP) and 225–401 (FRLA…SRSR). Residues 34-41 (GRQNVGKS), 83-87 (DTPGL), 149-152 (NKAD), 231-238 (GKPNSGKS), 278-282 (DTAGI), and 343-346 (NKWD) contribute to the GTP site. The region spanning 402-486 (RKVSTSELNK…PVRLEFRSDR (85 aa)) is the KH-like domain.

Belongs to the TRAFAC class TrmE-Era-EngA-EngB-Septin-like GTPase superfamily. EngA (Der) GTPase family. As to quaternary structure, associates with the 50S ribosomal subunit.

In terms of biological role, GTPase that plays an essential role in the late steps of ribosome biogenesis. This is GTPase Der from Leptospira borgpetersenii serovar Hardjo-bovis (strain L550).